Consider the following 102-residue polypeptide: ATP-dependent Clp protease adapter protein ClpS (102 aa).

This sequence belongs to the ClpS family. As to quaternary structure, binds to the N-terminal domain of the chaperone ClpA.

Functionally, involved in the modulation of the specificity of the ClpAP-mediated ATP-dependent protein degradation. This chain is ATP-dependent Clp protease adapter protein ClpS, found in Shewanella halifaxensis (strain HAW-EB4).